The primary structure comprises 189 residues: MYLVVGLGNIGKEYKQTRHNIGFDVVDIIAEKYNIEINRQKFKGSYGEGRIGNEKIILLKPSTYMNLSGESVIEAANFYKIDKENIIVIYDDMSIDIGKLRVRGKGSAGGHNGIKNIIQHLNSDIFPRVRVGIGQPDENVVNYVLGKFSKDQREIIEKVLAMSAKACISIVEDGVTEAMNKYNGVKIEV.

TRNA is bound at residue Tyr14. His19 serves as the catalytic Proton acceptor. The tRNA site is built by Tyr64, Asn66, and Asn112.

This sequence belongs to the PTH family. As to quaternary structure, monomer.

It localises to the cytoplasm. The enzyme catalyses an N-acyl-L-alpha-aminoacyl-tRNA + H2O = an N-acyl-L-amino acid + a tRNA + H(+). Its function is as follows. Hydrolyzes ribosome-free peptidyl-tRNAs (with 1 or more amino acids incorporated), which drop off the ribosome during protein synthesis, or as a result of ribosome stalling. Catalyzes the release of premature peptidyl moieties from peptidyl-tRNA molecules trapped in stalled 50S ribosomal subunits, and thus maintains levels of free tRNAs and 50S ribosomes. This chain is Peptidyl-tRNA hydrolase, found in Clostridium botulinum (strain 657 / Type Ba4).